The sequence spans 297 residues: Phosphoribosylaminoimidazole-succinocarboxamide synthase (297 aa).

The protein belongs to the SAICAR synthetase family.

The catalysed reaction is 5-amino-1-(5-phospho-D-ribosyl)imidazole-4-carboxylate + L-aspartate + ATP = (2S)-2-[5-amino-1-(5-phospho-beta-D-ribosyl)imidazole-4-carboxamido]succinate + ADP + phosphate + 2 H(+). It participates in purine metabolism; IMP biosynthesis via de novo pathway; 5-amino-1-(5-phospho-D-ribosyl)imidazole-4-carboxamide from 5-amino-1-(5-phospho-D-ribosyl)imidazole-4-carboxylate: step 1/2. The sequence is that of Phosphoribosylaminoimidazole-succinocarboxamide synthase from Mycobacterium sp. (strain KMS).